The following is a 435-amino-acid chain: tRNA-2-methylthio-N(6)-dimethylallyladenosine synthase (435 aa).

One can recognise an MTTase N-terminal domain in the interval 1 to 117; it reads MKYFIKTYGC…MPKLLEDVKV (117 aa). Residues Cys-10, Cys-46, Cys-80, Cys-156, Cys-160, and Cys-163 each contribute to the [4Fe-4S] cluster site. The 229-residue stretch at 142-370 folds into the Radical SAM core domain; sequence RDNSYCAYVT…LEIQKAITSK (229 aa). One can recognise a TRAM domain in the interval 373–433; that stretch reads QRYKNTVQKV…FQSLDGVVQN (61 aa).

Belongs to the methylthiotransferase family. MiaB subfamily. In terms of assembly, monomer. It depends on [4Fe-4S] cluster as a cofactor.

The protein localises to the cytoplasm. It carries out the reaction N(6)-dimethylallyladenosine(37) in tRNA + (sulfur carrier)-SH + AH2 + 2 S-adenosyl-L-methionine = 2-methylsulfanyl-N(6)-dimethylallyladenosine(37) in tRNA + (sulfur carrier)-H + 5'-deoxyadenosine + L-methionine + A + S-adenosyl-L-homocysteine + 2 H(+). Functionally, catalyzes the methylthiolation of N6-(dimethylallyl)adenosine (i(6)A), leading to the formation of 2-methylthio-N6-(dimethylallyl)adenosine (ms(2)i(6)A) at position 37 in tRNAs that read codons beginning with uridine. This Hydrogenobaculum sp. (strain Y04AAS1) protein is tRNA-2-methylthio-N(6)-dimethylallyladenosine synthase.